Consider the following 85-residue polypeptide: Phosphocarrier protein HPr (85 aa).

The 85-residue stretch at 1–85 (MYEKQVEITA…HLVALMDQLH (85 aa)) folds into the HPr domain. The active-site Pros-phosphohistidine intermediate is histidine 15.

Belongs to the HPr family.

It localises to the cytoplasm. Its function is as follows. General (non sugar-specific) component of the phosphoenolpyruvate-dependent sugar phosphotransferase system (sugar PTS). This major carbohydrate active-transport system catalyzes the phosphorylation of incoming sugar substrates concomitantly with their translocation across the cell membrane. The phosphoryl group from phosphoenolpyruvate (PEP) is transferred to the phosphoryl carrier protein HPr by enzyme I. Phospho-HPr then transfers it to the PTS EIIA domain. This chain is Phosphocarrier protein HPr (ptsH), found in Vibrio cholerae serotype O1 (strain ATCC 39315 / El Tor Inaba N16961).